Consider the following 657-residue polypeptide: Glycogen debranching enzyme (657 aa).

Aspartate 336 acts as the Nucleophile in catalysis. Catalysis depends on glutamate 371, which acts as the Proton donor. Over residues 458-467 (NEANGEENRD) the composition is skewed to basic and acidic residues. Positions 458 to 479 (NEANGEENRDGTNNNYSNNHGK) are disordered.

The protein belongs to the glycosyl hydrolase 13 family.

The catalysed reaction is Hydrolysis of (1-&gt;6)-alpha-D-glucosidic linkages to branches with degrees of polymerization of three or four glucose residues in limit dextrin.. Its pathway is glycan degradation; glycogen degradation. Removes maltotriose and maltotetraose chains that are attached by 1,6-alpha-linkage to the limit dextrin main chain, generating a debranched limit dextrin. The chain is Glycogen debranching enzyme from Escherichia coli (strain K12 / DH10B).